Reading from the N-terminus, the 357-residue chain is Protein RecA (357 aa).

An ATP-binding site is contributed by 67–74; the sequence is GPESSGKT. Residues 333–357 are disordered; sequence NELTPATAGNSHDEDAFADEGNEEF. Residues 348–357 are compositionally biased toward acidic residues; it reads AFADEGNEEF.

The protein belongs to the RecA family.

It localises to the cytoplasm. Can catalyze the hydrolysis of ATP in the presence of single-stranded DNA, the ATP-dependent uptake of single-stranded DNA by duplex DNA, and the ATP-dependent hybridization of homologous single-stranded DNAs. It interacts with LexA causing its activation and leading to its autocatalytic cleavage. This chain is Protein RecA, found in Pectobacterium carotovorum subsp. carotovorum (strain PC1).